The sequence spans 220 residues: Ribosome biogenesis protein 15 (220 aa).

Residues 1–82 are disordered; it reads MVKSTSKTST…KQANEKKSKD (82 aa). Residues 9 to 30 are compositionally biased toward basic and acidic residues; it reads STKETVTKQPTEEKPIQEKEEL. Positions 39–60 are enriched in acidic residues; it reads SDEEDEKDEDEIEGLAASDDEQ. The region spanning 91–169 is the RRM domain; it reads GIIYVSRLPH…HLLQVRVLPK (79 aa).

As to quaternary structure, component of the pre-66S ribosomal particle. Interacts with NOP7 and RRP1.

It is found in the cytoplasm. Its subcellular location is the nucleus. The protein resides in the nucleolus. Functionally, involved in the biogenesis of the 60S ribosomal subunit. Required for pre-rRNA processing and cytokinesis. Associates with the precursors of the 25S and 5.8S rRNAs. The polypeptide is Ribosome biogenesis protein 15 (Saccharomyces cerevisiae (strain ATCC 204508 / S288c) (Baker's yeast)).